We begin with the raw amino-acid sequence, 523 residues long: Cytochrome P450 52-N1 (523 aa).

The helical transmembrane segment at 5–25 threads the bilayer; the sequence is AVLGAFAAFLLYMDVLYPFVI. Cys-469 contributes to the heme binding site.

This sequence belongs to the cytochrome P450 family. Requires heme as cofactor.

Its subcellular location is the membrane. It catalyses the reaction an omega-methyl-long-chain fatty acid + reduced [NADPH--hemoprotein reductase] + O2 = an omega-hydroxy-long-chain fatty acid + oxidized [NADPH--hemoprotein reductase] + H2O + H(+). The catalysed reaction is (9Z,12Z)-octadecadienoate + reduced [NADPH--hemoprotein reductase] + O2 = 18-hydroxy-(9Z,12Z)-octadecadienoate + oxidized [NADPH--hemoprotein reductase] + H2O + H(+). The enzyme catalyses (9Z)-octadecenoate + reduced [NADPH--hemoprotein reductase] + O2 = 18-hydroxy-(9Z)-octadecenoate + oxidized [NADPH--hemoprotein reductase] + H2O + H(+). It carries out the reaction hexadecanoate + reduced [NADPH--hemoprotein reductase] + O2 = 16-hydroxyhexadecanoate + oxidized [NADPH--hemoprotein reductase] + H2O + H(+). It catalyses the reaction (9Z)-hexadecenoate + reduced [NADPH--hemoprotein reductase] + O2 = (9Z)-16-hydroxyhexadec-9-enoate + oxidized [NADPH--hemoprotein reductase] + H2O + H(+). The catalysed reaction is octadecanoate + reduced [NADPH--hemoprotein reductase] + O2 = 18-hydroxyoctadecanoate + oxidized [NADPH--hemoprotein reductase] + H2O + H(+). Functionally, catalyzes the terminal (at the omega-position) hydroxylation of a fatty acid. Probably involved in alkane metabolism. Linoleic acid is the preferred substrate, but it acts on various other C-16, C-18 and C-20 saturated and unsaturated fatty acids, namely palmitic, palmitoleic, stearic, oleic, alpha-linoleic, arachidonic and myristic acid. This is Cytochrome P450 52-N1 from Starmerella bombicola (Yeast).